We begin with the raw amino-acid sequence, 1244 residues long: MNNQKVVAVLLQECKQVLDQLLLEAPDVSEEDKSEDQRCRALLPSELRTLIQEAKEMKWPFVPEKWQYKQAVGPEDKTNLKDVIGAGLQQLLASLRASILARDCAAAAAIVFLVDRFLYGLDVSGKLLQVAKGLHKLQPATPIAPQVVIRQARISVNSGKLLKAEYILSSLISNNGATGTWLYRNESDKVLVQSVCIQIRGQILQKLGMWYEAAELIWASIVGYLALPQPDKKGLSTSLGILADIFVSMSKNDYEKFKNNPQINLSLLKEFDHHLLSAAEACKLAAAFSAYTPLFVLTAVNIRGTCLLSYSSSNDCPPELKNLHLCEAKEAFEIGLLTKRDDEPVTGKQELHSFVKAAFGLTTVHRRLHGETGTVHAASQLCKEAMGKLYNFSTSSRSQDREALSQEVMSVIAQVKEHLQVQSFSNVDDRSYVPESFECRLDKLILHGQGDFQKILDTYSQHHTSVCEVFESDCGNNKNEQKDAKTGVCITALKTEIKNIDTVSTTQEKPHCQRDTGISSSLMGKNVQRELRRGGRRNWTHSDAFRVSLDQDVETETEPSDYSNGEGAVFNKSLSGSQTSSAWSNLSGFSSSASWEEVNYHVDDRSARKEPGKEHLVDTQCSTALSEELENDREGRAMHSLHSQLHDLSLQEPNNDNLEPSQNQPQQQMPLTPFSPHNTPGIFLAPGAGLLEGAPEGIQEVRNMGPRNTSAHSRPSYRSASWSSDSGRPKNMGTHPSVQKEEAFEIIVEFPETNCDVKDRQGKEQGEEISERGAGPTFKASPSWVDPEGETAESTEDAPLDFHRVLHNSLGNISMLPCSSFTPNWPVQNPDSRKSGGPVAEQGIDPDASTVDEEGQLLDSMDVPCTNGHGSHRLCILRQPPGQRAETPNSSVSGNILFPVLSEDCTTTEEGNQPGNMLNCSQNSSSSSVWWLKSPAFSSGSSEGDSPWSYLNSSGSSWVSLPGKMRKEILEARTLQPDDFEKLLAGVRHDWLFQRLENTGVFKPSQLHRAHSALLLKYSKKSELWTAQETIVYLGDYLTVKKKGRQRNAFWVHHLHQEEILGRYVGKDYKEQKGLWHHFTDVERQMTAQHYVTEFNKRLYEQNIPTQIFYIPSTILLILEDKTIKGCISVEPYILGEFVKLSNNTKVVKTEYKATEYGLAYGHFSYEFSNHRDVVVDLQGWVTGNGKGLIYLTDPQIHSVDQKVFTTNFGKRGIFYFFNNQHVECNEICHRLSLTRPSMEKPCT.

Residues F61, Q67, R116, 150–153, D231, K233, 236–237, and F295 each bind ADP-D-glycero-beta-D-manno-heptose; these read RQAR and ST. Disordered regions lie at residues 650–675, 701–737, 757–798, and 824–848; these read LQEPNNDNLEPSQNQPQQQMPLTPFS, VRNMGPRNTSAHSRPSYRSASWSSDSGRPKNMGTHPS, VKDR…TEDA, and NWPVQNPDSRKSGGPVAEQGIDPDA. Over residues 652–675 the composition is skewed to polar residues; sequence EPNNDNLEPSQNQPQQQMPLTPFS. The span at 713 to 726 shows a compositional bias: low complexity; sequence SRPSYRSASWSSDS. Over residues 757-771 the composition is skewed to basic and acidic residues; the sequence is VKDRQGKEQGEEISE. Residues 787 to 798 are compositionally biased toward acidic residues; sequence PEGETAESTEDA. The region spanning 1017 to 1237 is the Alpha-type protein kinase domain; it reads KYSKKSELWT…ICHRLSLTRP (221 aa).

Belongs to the protein kinase superfamily. Alpha-type protein kinase family. ALPK subfamily. In terms of tissue distribution, highly expressed in liver. Expressed in the optic nerve and retinal pigmented epithelium. Lower expression is observed in the macula and extramacular retina.

The protein resides in the cytoplasm. Its subcellular location is the cytosol. The protein localises to the cytoskeleton. It localises to the spindle pole. It is found in the microtubule organizing center. The protein resides in the centrosome. Its subcellular location is the cell projection. The protein localises to the cilium. The catalysed reaction is L-seryl-[protein] + ATP = O-phospho-L-seryl-[protein] + ADP + H(+). It catalyses the reaction L-threonyl-[protein] + ATP = O-phospho-L-threonyl-[protein] + ADP + H(+). Serine/threonine-protein kinase activity is stimulated upon ADP-D-glycero-beta-D-manno-heptose (ADP-Heptose)-binding. Functionally, serine/threonine-protein kinase that detects bacterial pathogen-associated molecular pattern metabolites (PAMPs) and initiates an innate immune response, a critical step for pathogen elimination and engagement of adaptive immunity. Specifically recognizes and binds ADP-D-glycero-beta-D-manno-heptose (ADP-Heptose), a potent PAMP present in all Gram-negative and some Gram-positive bacteria. ADP-Heptose-binding stimulates its kinase activity to phosphorylate and activate TIFA, triggering pro-inflammatory NF-kappa-B signaling. May be involved in monosodium urate monohydrate (MSU)-induced inflammation by mediating phosphorylation of unconventional myosin MYO9A. May also play a role in apical protein transport by mediating phosphorylation of unconventional myosin MYO1A. May play a role in ciliogenesis. In Homo sapiens (Human), this protein is Alpha-protein kinase 1.